The sequence spans 296 residues: Trimeric intracellular cation channel type A (296 aa).

Over 1–19 the chain is Lumenal; it reads MELPGALQLGELAAAFASV. A helical membrane pass occupies residues 20-37; that stretch reads PVFPLFDAAYFIVSVLYL. At 38–51 the chain is on the cytoplasmic side; it reads KYEPGAVEMSRKSP. A helical membrane pass occupies residues 52–73; that stretch reads FASWLCAMLHCFGSYILADLLL. Ca(2+) is bound at residue glycine 74. Over 74 to 85 the chain is Lumenal; that stretch reads GESPIHYFSNNS. The chain crosses the membrane as a helical span at residues 86–103; the sequence is SVILATAVWYLIFFCPMN. Residues 104 to 107 are Cytoplasmic-facing; the sequence is LFYK. The chain crosses the membrane as a helical span at residues 108-126; sequence CVSFLPVKLIFVAMKEVVR. A 1,2-diacyl-sn-glycero-3-phospho-(1D-myo-inositol-4,5-bisphosphate)-binding residues include lysine 122 and arginine 126. The Lumenal segment spans residues 127 to 144; that stretch reads VRKIAAGVHHAHHQYHHG. A helical transmembrane segment spans residues 145–162; the sequence is WFIMMATGWVKGSGVALM. Topologically, residues 163–183 are cytoplasmic; sequence SNFEQLLRGVWRPETNEILHM. A helical transmembrane segment spans residues 184–201; it reads SFPTKASLYGTVLFTLQQ. The Lumenal segment spans residues 202–209; the sequence is THWLPVSE. The helical transmembrane segment at 210–230 threads the bilayer; sequence ANLVFFFTMFMIVCKVFMTAT. Topologically, residues 231–273 are cytoplasmic; sequence HSHASPFAPVEGFICPVFFGSVSSGHTSHHNQHGHSHEASYQP. Residues 256–296 are disordered; that stretch reads HTSHHNQHGHSHEASYQPPPPVKSKEELNEGTRKRKAKKAE. A compositionally biased stretch (basic and acidic residues) spans 278–287; the sequence is KSKEELNEGT.

It belongs to the TMEM38 family. In terms of assembly, homotrimer; conformation seems to be controled by binding to diacylglycerol (DAG).

Its subcellular location is the sarcoplasmic reticulum membrane. It is found in the nucleus membrane. The enzyme catalyses K(+)(in) = K(+)(out). Channel activity is activated by a change of voltage within the sarcoplasmic reticulum lumen and blocked by luminal high Ca(2+) levels. Intracellular monovalent cation channel required for maintenance of rapid intracellular calcium release. Acts as a potassium counter-ion channel that functions in synchronization with calcium release from intracellular stores. Opened by a change of voltage within the sarcoplasmic reticulum lumen. This Gallus gallus (Chicken) protein is Trimeric intracellular cation channel type A (TMEM38A).